The chain runs to 326 residues: Phospho-N-acetylmuramoyl-pentapeptide-transferase (326 aa).

A run of 9 helical transmembrane segments spans residues 3-23 (ISISAGIVTFLLTLVEIPAFI), 51-71 (TMGGLVFLITSVLVAFFFALF), 79-99 (VGMILFILVLYGLVGFLDDFL), 115-135 (LALQLLGGVIFYLFYERGGDI), 138-158 (VFGYPVHLGFFYIFFALFWLV), 169-189 (GVDGLASISVVISLSAYGVIA), 195-215 (MDILLVILAMIGGLLGFFIFN), 221-243 (VFMGDVGSLALGGMLAAISMALH), and 306-326 (FFFWGVGLLASLLTLAILYLM).

Belongs to the glycosyltransferase 4 family. MraY subfamily. It depends on Mg(2+) as a cofactor.

It localises to the cell membrane. The enzyme catalyses UDP-N-acetyl-alpha-D-muramoyl-L-alanyl-gamma-D-glutamyl-L-lysyl-D-alanyl-D-alanine + di-trans,octa-cis-undecaprenyl phosphate = Mur2Ac(oyl-L-Ala-gamma-D-Glu-L-Lys-D-Ala-D-Ala)-di-trans,octa-cis-undecaprenyl diphosphate + UMP. Its pathway is cell wall biogenesis; peptidoglycan biosynthesis. Its function is as follows. Catalyzes the initial step of the lipid cycle reactions in the biosynthesis of the cell wall peptidoglycan: transfers peptidoglycan precursor phospho-MurNAc-pentapeptide from UDP-MurNAc-pentapeptide onto the lipid carrier undecaprenyl phosphate, yielding undecaprenyl-pyrophosphoryl-MurNAc-pentapeptide, known as lipid I. In Streptococcus pneumoniae (strain 70585), this protein is Phospho-N-acetylmuramoyl-pentapeptide-transferase.